Here is a 139-residue protein sequence, read N- to C-terminus: Nucleoside diphosphate kinase (139 aa).

Residues Lys11, Phe59, Arg87, Thr93, Arg104, and Asn114 each coordinate ATP. The Pros-phosphohistidine intermediate role is filled by His117.

It belongs to the NDK family. In terms of assembly, homotetramer. Mg(2+) is required as a cofactor.

It localises to the cytoplasm. The enzyme catalyses a 2'-deoxyribonucleoside 5'-diphosphate + ATP = a 2'-deoxyribonucleoside 5'-triphosphate + ADP. It carries out the reaction a ribonucleoside 5'-diphosphate + ATP = a ribonucleoside 5'-triphosphate + ADP. Functionally, major role in the synthesis of nucleoside triphosphates other than ATP. The ATP gamma phosphate is transferred to the NDP beta phosphate via a ping-pong mechanism, using a phosphorylated active-site intermediate. This is Nucleoside diphosphate kinase from Wolbachia sp. subsp. Brugia malayi (strain TRS).